Reading from the N-terminus, the 433-residue chain is Inorganic triphosphatase (433 aa).

Residues 2-202 enclose the CYTH domain; the sequence is AQEIELKFIV…ARGYHLAQGN (201 aa). The region spanning 218–433 is the CHAD domain; that stretch reads KADVEQGLEA…EPFWLHSGKR (216 aa).

It carries out the reaction triphosphate + H2O = phosphate + diphosphate. Inhibited by calcium ion and activated by magnesium ion. Its function is as follows. Involved in the hydrolysis of the beta-gamma-phosphoanhydride linkage of triphosphate-containing substrates (inorganic or nucleoside-linked). Catalyzes the hydrolysis of inorganic triphosphate (PPPi), which could be cytotoxic because of its high affinity for calcium ion, thereby interfering with calcium signaling. It also hydrolyzes slowly thiamine triphosphate (ThTP). YgiF is a specific PPPase, but it contributes only marginally to the total PPPase activity in E.coli, where the main enzyme responsible for hydrolysis of PPPi is inorganic pyrophosphatase (PPase). The chain is Inorganic triphosphatase (ygiF) from Escherichia coli (strain K12).